We begin with the raw amino-acid sequence, 892 residues long: Iodate reductase subunit IdrA (892 aa).

[3Fe-4S] cluster is bound by residues C27, C30, and C34. Positions 431 to 442 are enriched in gly residues; the sequence is RGGGHQRGGLSA. Residues 431-452 form a disordered region; it reads RGGGHQRGGLSAGGNSEWLSPE.

It belongs to the prokaryotic molybdopterin-containing oxidoreductase family. The iodate reductase (Idr) complex is composed of a molybdopterin-dependent iodate reductase (IdrA and IdrB subunits) and two associated peroxidases (IdrP1 and IdrP2). It depends on [3Fe-4S] cluster as a cofactor. The cofactor is Mo-bis(molybdopterin guanine dinucleotide).

It is found in the periplasm. In terms of biological role, involved in iodate respiration. Probably catalyzes the reduction of iodate (IO(3)(-)) to hypoiodous acid (HIO) and H(2)O(2), using a reduced cytochrome c as the electron donor. The protein is Iodate reductase subunit IdrA of Pseudomonas sp. (strain SCT).